Here is a 405-residue protein sequence, read N- to C-terminus: Acetate kinase (405 aa).

Asn7 is a binding site for Mg(2+). Lys14 is an ATP binding site. Residue Arg98 coordinates substrate. The active-site Proton donor/acceptor is Asp155. Residues 215–219 (HLGNG), 289–291 (DMR), and 337–341 (GIGEN) contribute to the ATP site. Residue Glu391 coordinates Mg(2+).

The protein belongs to the acetokinase family. In terms of assembly, homodimer. Requires Mg(2+) as cofactor. The cofactor is Mn(2+).

The protein resides in the cytoplasm. It carries out the reaction acetate + ATP = acetyl phosphate + ADP. It participates in metabolic intermediate biosynthesis; acetyl-CoA biosynthesis; acetyl-CoA from acetate: step 1/2. Its function is as follows. Catalyzes the formation of acetyl phosphate from acetate and ATP. Can also catalyze the reverse reaction. In Desulfotalea psychrophila (strain LSv54 / DSM 12343), this protein is Acetate kinase.